A 60-amino-acid chain; its full sequence is Andropin (60 aa).

A signal peptide spans 1–23 (MKYFVVLVVLALILAIAVGPSDA).

This sequence belongs to the andropin family. As to expression, ejaculatory duct of adult males.

Its subcellular location is the secreted. Functionally, male-specific peptide with moderate activity against Gram-positive bacteria. In Drosophila simulans (Fruit fly), this protein is Andropin (Anp).